The sequence spans 199 residues: MAEEQVLNTHNASLLLSAANKSHYPEDDIPEIALAGRSNVGKSSFINTLLGRKNLARTSGKPGKTQLLNFFNIDDKIRFVDVPGYGYAKVSKVERARWGKMIEEYLTSRDNLRAVVSLVDLRHEPSTEDVQMYEFLKYYEIPVIVVATKADKIPRGKWNKHESMIKKKLNFEQEDAFILFSSVDRIGIDQAWDAILEQI.

Residues 28-199 (DIPEIALAGR…QAWDAILEQI (172 aa)) form the EngB-type G domain. GTP-binding positions include 36–43 (GRSNVGKS), 63–67 (GKTQL), 81–84 (DVPG), 148–151 (TKAD), and 180–182 (FSS). Residues Ser-43 and Thr-65 each contribute to the Mg(2+) site.

The protein belongs to the TRAFAC class TrmE-Era-EngA-EngB-Septin-like GTPase superfamily. EngB GTPase family. The cofactor is Mg(2+).

Functionally, necessary for normal cell division and for the maintenance of normal septation. The protein is Probable GTP-binding protein EngB of Streptococcus uberis (strain ATCC BAA-854 / 0140J).